Consider the following 369-residue polypeptide: tRNA 2-selenouridine synthase (369 aa).

One can recognise a Rhodanese domain in the interval 15-138 (FIAGQPLIDL…MRQYLIGVIE (124 aa)). Cys-98 serves as the catalytic S-selanylcysteine intermediate.

Belongs to the SelU family. In terms of assembly, monomer.

The enzyme catalyses 5-methylaminomethyl-2-thiouridine(34) in tRNA + selenophosphate + (2E)-geranyl diphosphate + H2O + H(+) = 5-methylaminomethyl-2-selenouridine(34) in tRNA + (2E)-thiogeraniol + phosphate + diphosphate. The catalysed reaction is 5-methylaminomethyl-2-thiouridine(34) in tRNA + (2E)-geranyl diphosphate = 5-methylaminomethyl-S-(2E)-geranyl-thiouridine(34) in tRNA + diphosphate. It catalyses the reaction 5-methylaminomethyl-S-(2E)-geranyl-thiouridine(34) in tRNA + selenophosphate + H(+) = 5-methylaminomethyl-2-(Se-phospho)selenouridine(34) in tRNA + (2E)-thiogeraniol. It carries out the reaction 5-methylaminomethyl-2-(Se-phospho)selenouridine(34) in tRNA + H2O = 5-methylaminomethyl-2-selenouridine(34) in tRNA + phosphate. Functionally, involved in the post-transcriptional modification of the uridine at the wobble position (U34) of tRNA(Lys), tRNA(Glu) and tRNA(Gln). Catalyzes the conversion of 2-thiouridine (S2U-RNA) to 2-selenouridine (Se2U-RNA). Acts in a two-step process involving geranylation of 2-thiouridine (S2U) to S-geranyl-2-thiouridine (geS2U) and subsequent selenation of the latter derivative to 2-selenouridine (Se2U) in the tRNA chain. This Shewanella sp. (strain MR-7) protein is tRNA 2-selenouridine synthase.